A 264-amino-acid chain; its full sequence is 3-methyl-2-oxobutanoate hydroxymethyltransferase (264 aa).

The Mg(2+) site is built by Asp41 and Asp80. Residues 41–42 (DS), Asp80, and Lys109 contribute to the 3-methyl-2-oxobutanoate site. Glu111 serves as a coordination point for Mg(2+). Catalysis depends on Glu178, which acts as the Proton acceptor.

This sequence belongs to the PanB family. As to quaternary structure, homodecamer; pentamer of dimers. Mg(2+) serves as cofactor.

It localises to the cytoplasm. The catalysed reaction is 3-methyl-2-oxobutanoate + (6R)-5,10-methylene-5,6,7,8-tetrahydrofolate + H2O = 2-dehydropantoate + (6S)-5,6,7,8-tetrahydrofolate. Its pathway is cofactor biosynthesis; (R)-pantothenate biosynthesis; (R)-pantoate from 3-methyl-2-oxobutanoate: step 1/2. Catalyzes the reversible reaction in which hydroxymethyl group from 5,10-methylenetetrahydrofolate is transferred onto alpha-ketoisovalerate to form ketopantoate. The protein is 3-methyl-2-oxobutanoate hydroxymethyltransferase of Thermosipho melanesiensis (strain DSM 12029 / CIP 104789 / BI429).